The sequence spans 229 residues: UPF0758 protein Mbur_0382 (229 aa).

An MPN domain is found at lysine 106–isoleucine 228. 3 residues coordinate Zn(2+): histidine 177, histidine 179, and aspartate 190. Residues histidine 177–aspartate 190 carry the JAMM motif motif.

The protein belongs to the UPF0758 family.

The chain is UPF0758 protein Mbur_0382 from Methanococcoides burtonii (strain DSM 6242 / NBRC 107633 / OCM 468 / ACE-M).